Reading from the N-terminus, the 64-residue chain is Small ribosomal subunit protein bS21 (64 aa).

The segment at 26-64 is disordered; that stretch reads DGILSEARRRTRFERPPTRRKRKDAAKRRLAIKAARKAT. The span at 43-64 shows a compositional bias: basic residues; the sequence is TRRKRKDAAKRRLAIKAARKAT.

It belongs to the bacterial ribosomal protein bS21 family.

The polypeptide is Small ribosomal subunit protein bS21 (Dehalococcoides mccartyi (strain ATCC BAA-2100 / JCM 16839 / KCTC 5957 / BAV1)).